The following is a 151-amino-acid chain: Superoxide dismutase [Cu-Zn] 4 (151 aa).

His45, His47, and His62 together coordinate Cu cation. A disulfide bridge links Cys56 with Cys145. Positions 62, 70, 79, and 82 each coordinate Zn(2+). His120 is a Cu cation binding site.

It belongs to the Cu-Zn superoxide dismutase family. As to quaternary structure, homodimer. Cu cation serves as cofactor. Zn(2+) is required as a cofactor.

The protein resides in the cytoplasm. It catalyses the reaction 2 superoxide + 2 H(+) = H2O2 + O2. Destroys radicals which are normally produced within the cells and which are toxic to biological systems. Protects spores from cellular damage caused by UV LIGHT. The sequence is that of Superoxide dismutase [Cu-Zn] 4 (sodD) from Dictyostelium discoideum (Social amoeba).